Consider the following 639-residue polypeptide: Chaperone protein HtpG (639 aa).

The segment at 1–347 (MSQQETHGFQ…SNDLPLNVSR (347 aa)) is a; substrate-binding. Positions 348 to 564 (EILQDNKVTT…EGEMSTQMIK (217 aa)) are b. The segment at 565–639 (LMQAAGQDVP…MNQMLLASVK (75 aa)) is c.

Belongs to the heat shock protein 90 family. In terms of assembly, homodimer.

Its subcellular location is the cytoplasm. Functionally, molecular chaperone. Has ATPase activity. The polypeptide is Chaperone protein HtpG (Shewanella halifaxensis (strain HAW-EB4)).